The following is a 645-amino-acid chain: Rab11 family-interacting protein 5 (645 aa).

Residues 1–146 (MALVRDPEPA…AGRAQHTQWY (146 aa)) enclose the C2 domain. Phosphoserine is present on residues Ser176, Ser283, Ser286, Ser307, Ser357, and Ser367. The segment at 271–299 (GAELLTRSPSHSSWLSTEGGRDSIQSPKL) is disordered. Polar residues predominate over residues 277–286 (RSPSHSSWLS). Residues 341-550 (SHVYNEEPQP…STALSSGLER (210 aa)) form a disordered region. Positions 357 to 374 (SISGPFPPSSSLHSVPPR) are enriched in low complexity. A compositionally biased stretch (basic and acidic residues) spans 375-387 (SSEEGSRSSDDSW). A phosphoserine mark is found at Ser391 and Ser395. Basic residues predominate over residues 452–463 (RMGLFHHHHHQG). 5 positions are modified to phosphoserine: Ser486, Ser530, Ser539, Ser545, and Ser640. Positions 578-640 (KDSAVLDQSA…ETSPTLLQIS (63 aa)) constitute an FIP-RBD domain.

In terms of assembly, interacts with RAB11FIP4. Interacts with NAPG. Interacts with RO60. Interacts with RAB11A that has been activated by GTP binding. In terms of processing, phosphorylated on serine and threonine residues. Phosphorylation at Ser-357 is PKA-dependent.

It is found in the cytoplasm. It localises to the recycling endosome membrane. The protein localises to the early endosome membrane. The protein resides in the golgi apparatus membrane. Its subcellular location is the cytoplasmic vesicle. It is found in the secretory vesicle membrane. It localises to the mitochondrion membrane. In terms of biological role, rab effector involved in protein trafficking from apical recycling endosomes to the apical plasma membrane. Involved in insulin granule exocytosis. May regulate V-ATPase intracellular transport in response to extracellular acidosis. The polypeptide is Rab11 family-interacting protein 5 (Mus musculus (Mouse)).